We begin with the raw amino-acid sequence, 140 residues long: Fluoride-specific ion channel FluC 1 (140 aa).

4 consecutive transmembrane segments (helical) span residues 3–23, 38–58, 80–100, and 113–133; these read TGAT…GAAA, APLW…GLVL, ILYP…STVM, and IAGV…ALWC. 2 residues coordinate Na(+): Gly91 and Thr94.

It belongs to the fluoride channel Fluc/FEX (TC 1.A.43) family.

The protein localises to the cell membrane. The enzyme catalyses fluoride(in) = fluoride(out). With respect to regulation, na(+) is not transported, but it plays an essential structural role and its presence is essential for fluoride channel function. Functionally, fluoride-specific ion channel. Important for reducing fluoride concentration in the cell, thus reducing its toxicity. The polypeptide is Fluoride-specific ion channel FluC 1 (Corynebacterium jeikeium (strain K411)).